The following is a 409-amino-acid chain: Autotransproter heptosyltransferase BAHTCr (409 aa).

The ADP-D-glycero-beta-D-manno-heptose site is built by Thr107, Leu108, and Gly109. The Proton acceptor role is filled by Asp110. ADP-D-glycero-beta-D-manno-heptose contacts are provided by Gln224, Thr226, Lys230, Arg257, Gly302, and Glu326. Positions 339, 342, 358, and 370 each coordinate Fe(3+).

It belongs to the glycosyltransferase 9 family. As to quaternary structure, homododecamer composed of 6 homodimers forming a ring. The cofactor is Fe(3+).

The protein resides in the cytoplasm. It catalyses the reaction ADP-D-glycero-beta-D-manno-heptose + L-seryl-[protein] = O-(D-glycero-alpha-D-manno-heptosyl)-L-seryl-[protein] + ADP + H(+). The catalysed reaction is ADP-L-glycero-beta-D-manno-heptose + L-seryl-[protein] = O-(L-glycero-alpha-D-manno-heptosyl)-L-seryl-[protein] + ADP + H(+). Its function is as follows. Glycosylates autotransporter CARC. By glycosylating CARC, involved in the colonization of the mouse host gastrointestinal tract. The sequence is that of Autotransproter heptosyltransferase BAHTCr from Citrobacter rodentium (strain ICC168) (Citrobacter freundii biotype 4280).